The following is an 87-amino-acid chain: UPF0237 protein YjhC (87 aa).

In terms of domain architecture, ACT spans 4-76 (VVTVVGADKI…EALGVNIHVQ (73 aa)).

Belongs to the UPF0237 family.

This is UPF0237 protein YjhC (yjhC) from Lactococcus lactis subsp. lactis (strain IL1403) (Streptococcus lactis).